A 610-amino-acid polypeptide reads, in one-letter code: Lipoprotein LpqB (610 aa).

The N-terminal stretch at 1–27 (MGAEGGGRRRALRLGAYVGCGAVLLTG) is a signal peptide. Residue Cys-28 is the site of N-palmitoyl cysteine attachment. The S-diacylglycerol cysteine moiety is linked to residue Cys-28.

It belongs to the LpqB lipoprotein family.

It is found in the cell membrane. The sequence is that of Lipoprotein LpqB from Streptomyces avermitilis (strain ATCC 31267 / DSM 46492 / JCM 5070 / NBRC 14893 / NCIMB 12804 / NRRL 8165 / MA-4680).